We begin with the raw amino-acid sequence, 488 residues long: Lysine--tRNA ligase (488 aa).

Mg(2+) is bound by residues glutamate 397 and glutamate 404.

The protein belongs to the class-II aminoacyl-tRNA synthetase family. As to quaternary structure, homodimer. Requires Mg(2+) as cofactor.

It localises to the cytoplasm. It catalyses the reaction tRNA(Lys) + L-lysine + ATP = L-lysyl-tRNA(Lys) + AMP + diphosphate. The polypeptide is Lysine--tRNA ligase (lysS) (Mycoplasmopsis fermentans (strain ATCC 19989 / NBRC 14854 / NCTC 10117 / PG18) (Mycoplasma fermentans)).